A 1043-amino-acid polypeptide reads, in one-letter code: RNA cytidine acetyltransferase (1043 aa).

ATP-binding positions include 285–294 (GRGKSAAVGL) and Arg462. Residues 551 to 736 (VLMAPIDKSR…VPVYIRQNSN (186 aa)) enclose the N-acetyltransferase domain. Acetyl-CoA contacts are provided by residues 622 to 624 (VAV), 629 to 635 (QSMGYGG), and Arg723. The interval 1020-1043 (IPDAKDPANKNAKKKKRFSSGGRR) is disordered. Residues 1030-1043 (NAKKKKRFSSGGRR) show a composition bias toward basic residues.

It belongs to the RNA cytidine acetyltransferase family. NAT10 subfamily. As to quaternary structure, part of the small subunit (SSU) processome, composed of more than 70 proteins and the RNA chaperone small nucleolar RNA (snoRNA) U3.

The protein localises to the nucleus. Its subcellular location is the nucleolus. It carries out the reaction a cytidine in 18S rRNA + acetyl-CoA + ATP + H2O = an N(4)-acetylcytidine in 18S rRNA + ADP + phosphate + CoA + H(+). The catalysed reaction is a cytidine in tRNA + acetyl-CoA + ATP + H2O = an N(4)-acetylcytidine in tRNA + ADP + phosphate + CoA + H(+). In terms of biological role, RNA cytidine acetyltransferase with specificity toward both 18S rRNA and tRNAs. Catalyzes the formation of N(4)-acetylcytidine (ac4C) in 18S rRNA. Required for early nucleolar cleavages of precursor rRNA at sites A0, A1 and A2 during 18S rRNA synthesis. Catalyzes the formation of ac4C in serine and leucine tRNAs. Requires a tRNA-binding adapter protein for full tRNA acetyltransferase activity but not for 18S rRNA acetylation. Part of the small subunit (SSU) processome, first precursor of the small eukaryotic ribosomal subunit. During the assembly of the SSU processome in the nucleolus, many ribosome biogenesis factors, an RNA chaperone and ribosomal proteins associate with the nascent pre-rRNA and work in concert to generate RNA folding, modifications, rearrangements and cleavage as well as targeted degradation of pre-ribosomal RNA by the RNA exosome. This chain is RNA cytidine acetyltransferase, found in Caenorhabditis elegans.